Consider the following 200-residue polypeptide: Ciliary microtubule inner protein 2C (200 aa).

This sequence belongs to the CIMIP2 family. As to quaternary structure, microtubule inner protein component of sperm flagellar doublet microtubules.

The protein resides in the cytoplasm. It is found in the cytoskeleton. The protein localises to the cilium axoneme. Its subcellular location is the flagellum axoneme. In terms of biological role, microtubule inner protein (MIP) part of the dynein-decorated doublet microtubules (DMTs) in cilia axoneme, which is required for motile cilia beating. Binds to the intra-tubulin interfaces. This Mus musculus (Mouse) protein is Ciliary microtubule inner protein 2C (Cimip2c).